The following is a 696-amino-acid chain: Translation initiation factor IF-2 (696 aa).

In terms of domain architecture, tr-type G spans 187-361 (ERPPVVTVMG…EMQEIKGIPD (175 aa)). Residues 196–203 (GHVDHGKT) are G1. Residue 196–203 (GHVDHGKT) coordinates GTP. A G2 region spans residues 221–225 (GITQS). The G3 stretch occupies residues 242 to 245 (DTPG). GTP contacts are provided by residues 242-246 (DTPGH) and 296-299 (NKID). Positions 296–299 (NKID) are G4. Positions 333-335 (SAK) are G5.

It belongs to the TRAFAC class translation factor GTPase superfamily. Classic translation factor GTPase family. IF-2 subfamily.

The protein localises to the cytoplasm. One of the essential components for the initiation of protein synthesis. Protects formylmethionyl-tRNA from spontaneous hydrolysis and promotes its binding to the 30S ribosomal subunits. Also involved in the hydrolysis of GTP during the formation of the 70S ribosomal complex. In Thermosipho africanus (strain TCF52B), this protein is Translation initiation factor IF-2.